A 243-amino-acid chain; its full sequence is Type III pantothenate kinase (243 aa).

ATP is bound at residue Asp-6–Lys-13. Residues Tyr-87 and Gly-94–Arg-97 contribute to the substrate site. The active-site Proton acceptor is Asp-96. Asp-117 serves as a coordination point for K(+). ATP is bound at residue Thr-120. Thr-172 contributes to the substrate binding site.

It belongs to the type III pantothenate kinase family. As to quaternary structure, homodimer. Requires NH4(+) as cofactor. K(+) is required as a cofactor.

The protein resides in the cytoplasm. It carries out the reaction (R)-pantothenate + ATP = (R)-4'-phosphopantothenate + ADP + H(+). Its pathway is cofactor biosynthesis; coenzyme A biosynthesis; CoA from (R)-pantothenate: step 1/5. Its function is as follows. Catalyzes the phosphorylation of pantothenate (Pan), the first step in CoA biosynthesis. This is Type III pantothenate kinase from Christiangramia forsetii (strain DSM 17595 / CGMCC 1.15422 / KT0803) (Gramella forsetii).